Consider the following 163-residue polypeptide: Large ribosomal subunit protein bL17 (163 aa).

The disordered stretch occupies residues 127-163; sequence KEVKKAKSRRGGKAKKAEGTAPEAPAAESESTTEASE. A compositionally biased stretch (basic residues) spans 128–140; it reads EVKKAKSRRGGKA. Residues 145-163 are compositionally biased toward low complexity; that stretch reads GTAPEAPAAESESTTEASE.

This sequence belongs to the bacterial ribosomal protein bL17 family. In terms of assembly, part of the 50S ribosomal subunit. Contacts protein L32.

This is Large ribosomal subunit protein bL17 from Flavobacterium johnsoniae (strain ATCC 17061 / DSM 2064 / JCM 8514 / BCRC 14874 / CCUG 350202 / NBRC 14942 / NCIMB 11054 / UW101) (Cytophaga johnsonae).